Here is a 258-residue protein sequence, read N- to C-terminus: MMNPLIIKLGGVLLDSEEALERLFTALVNYREAHQRPLIIVHGGGCVVDELMKQLNLPVQKKNGLRVTPAEQIDIITGALAGTANKTLLAWAKKHGISSVGLFLGDGDSVKVTQLDAELGHVGLAQPGSPTLINTLLAGGYLPVVSSIGVTDEGQLMNVNADQAATALAATLGADLILLSDVSGILDGKGQRIAEMTAEKAEQLIEQGIITDGMIVKVNAALDAARALGRPVDIASWRHAEQLPALFNGTPIGTRILA.

Substrate contacts are provided by residues 44 to 45, arginine 66, and asparagine 158; that span reads GG. ATP contacts are provided by residues 181–186 and 209–211; these read DVSGIL and IIT.

It belongs to the acetylglutamate kinase family. ArgB subfamily. Homodimer.

It localises to the cytoplasm. It carries out the reaction N-acetyl-L-glutamate + ATP = N-acetyl-L-glutamyl 5-phosphate + ADP. The protein operates within amino-acid biosynthesis; L-arginine biosynthesis; N(2)-acetyl-L-ornithine from L-glutamate: step 2/4. Its function is as follows. Catalyzes the ATP-dependent phosphorylation of N-acetyl-L-glutamate. The sequence is that of Acetylglutamate kinase from Klebsiella pneumoniae subsp. pneumoniae (strain ATCC 700721 / MGH 78578).